The chain runs to 239 residues: Uridylate kinase (239 aa).

10–13 lines the ATP pocket; the sequence is KLSG. The involved in allosteric activation by GTP stretch occupies residues 18 to 23; it reads GEDGYG. Glycine 52 contributes to the UMP binding site. Residues glycine 53 and arginine 57 each contribute to the ATP site. Residues aspartate 72 and 133–140 each bind UMP; that span reads TGNPYFTT. ATP is bound by residues threonine 160, tyrosine 166, and aspartate 169.

The protein belongs to the UMP kinase family. In terms of assembly, homohexamer.

Its subcellular location is the cytoplasm. It carries out the reaction UMP + ATP = UDP + ADP. It participates in pyrimidine metabolism; CTP biosynthesis via de novo pathway; UDP from UMP (UMPK route): step 1/1. With respect to regulation, allosterically activated by GTP. Inhibited by UTP. Its function is as follows. Catalyzes the reversible phosphorylation of UMP to UDP. The protein is Uridylate kinase of Chlorobium chlorochromatii (strain CaD3).